A 221-amino-acid polypeptide reads, in one-letter code: Penicillin-binding protein activator LpoB (221 aa).

The signal sequence occupies residues 1–20 (MLNRMYRYALLATVALALSG). Residue Cys21 is the site of N-palmitoyl cysteine attachment. Residue Cys21 is the site of S-diacylglycerol cysteine attachment. The segment at 29–82 (PAPVEEAQPGTQQPTQPVPPPTQPVPTVPSVPSIPAQPGPIEHQPENATPEPKA) is disordered. Over residues 44–57 (QPVPPPTQPVPTVP) the composition is skewed to pro residues.

Belongs to the LpoB family. As to quaternary structure, interacts with PBP1b.

It is found in the cell outer membrane. Functionally, regulator of peptidoglycan synthesis that is essential for the function of penicillin-binding protein 1B (PBP1b). The polypeptide is Penicillin-binding protein activator LpoB (Cronobacter turicensis (strain DSM 18703 / CCUG 55852 / LMG 23827 / z3032)).